The primary structure comprises 333 residues: uncharacterized protein (333 aa).

This sequence to bacterial alkanal monooxygenase alpha and beta chains.

This is an uncharacterized protein from Bacillus subtilis (strain 168).